Consider the following 122-residue polypeptide: Large ribosomal subunit protein uL18 (122 aa).

Belongs to the universal ribosomal protein uL18 family. Part of the 50S ribosomal subunit; part of the 5S rRNA/L5/L18/L25 subcomplex. Contacts the 5S and 23S rRNAs.

In terms of biological role, this is one of the proteins that bind and probably mediate the attachment of the 5S RNA into the large ribosomal subunit, where it forms part of the central protuberance. The polypeptide is Large ribosomal subunit protein uL18 (Lachnospira eligens (strain ATCC 27750 / DSM 3376 / VPI C15-48 / C15-B4) (Eubacterium eligens)).